Consider the following 387-residue polypeptide: 3-ketoacyl-CoA thiolase (387 aa).

The Acyl-thioester intermediate role is filled by cysteine 91. Catalysis depends on proton acceptor residues histidine 343 and cysteine 373.

Belongs to the thiolase-like superfamily. Thiolase family. In terms of assembly, heterotetramer of two alpha chains (FadB) and two beta chains (FadA).

Its subcellular location is the cytoplasm. The enzyme catalyses an acyl-CoA + acetyl-CoA = a 3-oxoacyl-CoA + CoA. The protein operates within lipid metabolism; fatty acid beta-oxidation. Its function is as follows. Catalyzes the final step of fatty acid oxidation in which acetyl-CoA is released and the CoA ester of a fatty acid two carbons shorter is formed. This is 3-ketoacyl-CoA thiolase from Shigella sonnei (strain Ss046).